Reading from the N-terminus, the 259-residue chain is Hydroxyacylglutathione hydrolase (259 aa).

H56, H58, D60, H61, H112, D133, and H171 together coordinate Zn(2+).

This sequence belongs to the metallo-beta-lactamase superfamily. Glyoxalase II family. As to quaternary structure, monomer. It depends on Zn(2+) as a cofactor.

It catalyses the reaction an S-(2-hydroxyacyl)glutathione + H2O = a 2-hydroxy carboxylate + glutathione + H(+). It participates in secondary metabolite metabolism; methylglyoxal degradation; (R)-lactate from methylglyoxal: step 2/2. Functionally, thiolesterase that catalyzes the hydrolysis of S-D-lactoyl-glutathione to form glutathione and D-lactic acid. The polypeptide is Hydroxyacylglutathione hydrolase (Pseudomonas putida (strain GB-1)).